We begin with the raw amino-acid sequence, 176 residues long: Adenine phosphoribosyltransferase (176 aa).

It belongs to the purine/pyrimidine phosphoribosyltransferase family. Homodimer.

It is found in the cytoplasm. It carries out the reaction AMP + diphosphate = 5-phospho-alpha-D-ribose 1-diphosphate + adenine. It functions in the pathway purine metabolism; AMP biosynthesis via salvage pathway; AMP from adenine: step 1/1. Catalyzes a salvage reaction resulting in the formation of AMP, that is energically less costly than de novo synthesis. The protein is Adenine phosphoribosyltransferase of Thermobifida fusca (strain YX).